The primary structure comprises 387 residues: Sulfate adenylyltransferase (387 aa).

The protein belongs to the sulfate adenylyltransferase family.

It catalyses the reaction sulfate + ATP + H(+) = adenosine 5'-phosphosulfate + diphosphate. It participates in sulfur metabolism; hydrogen sulfide biosynthesis; sulfite from sulfate: step 1/3. In Deinococcus radiodurans (strain ATCC 13939 / DSM 20539 / JCM 16871 / CCUG 27074 / LMG 4051 / NBRC 15346 / NCIMB 9279 / VKM B-1422 / R1), this protein is Sulfate adenylyltransferase (sat).